A 354-amino-acid polypeptide reads, in one-letter code: NADH-quinone oxidoreductase subunit H (354 aa).

8 helical membrane passes run 22-42 (ILIRAVLIVVPVLLCVAYLIL), 91-111 (YLVAPLMVLMPAVAVWAVIPF), 124-144 (LLYVMAISSVGVYGVILAGWA), 162-182 (VSYEIAMGFALVTVLMVSGSL), 203-223 (LLSWNWLPLLPMFGVYFISGV), 250-270 (GMTFALFFLAEYINMIIISTM), 291-311 (IPGFFWLVIKVFLLLSVFIWI), and 326-346 (LGWKIFIPLTVAWLIIVAIWI).

Belongs to the complex I subunit 1 family. As to quaternary structure, NDH-1 is composed of 14 different subunits. Subunits NuoA, H, J, K, L, M, N constitute the membrane sector of the complex.

It localises to the cell inner membrane. The enzyme catalyses a quinone + NADH + 5 H(+)(in) = a quinol + NAD(+) + 4 H(+)(out). NDH-1 shuttles electrons from NADH, via FMN and iron-sulfur (Fe-S) centers, to quinones in the respiratory chain. The immediate electron acceptor for the enzyme in this species is believed to be ubiquinone. Couples the redox reaction to proton translocation (for every two electrons transferred, four hydrogen ions are translocated across the cytoplasmic membrane), and thus conserves the redox energy in a proton gradient. This subunit may bind ubiquinone. This Cupriavidus metallidurans (strain ATCC 43123 / DSM 2839 / NBRC 102507 / CH34) (Ralstonia metallidurans) protein is NADH-quinone oxidoreductase subunit H.